Reading from the N-terminus, the 991-residue chain is Receptor-like protein kinase HAIKU2 (991 aa).

The signal sequence occupies residues 1 to 19 (MLRLLFIVRLLFLMPLASS). Over 20–616 (RSNHSEEVEN…KRKHLSKVDM (597 aa)) the chain is Extracellular. The N-linked (GlcNAc...) asparagine glycan is linked to asparagine 22. 21 LRR repeats span residues 66–90 (DGNV…RFTD), 99–123 (LKLL…LGKC), 125–148 (RLRY…SLQL), 150–170 (EFLS…SLKD), 171–196 (LKRL…ILNL), 197–220 (TALQ…IKNL), 221–244 (VRLQ…IVQL), 246–267 (NLRQ…GFRN), 269–291 (TNLR…LRFL), 292–314 (KNLV…EFGD), 315–339 (FKSL…LGSW), 341–363 (AFKY…MCKK), 365–387 (VMTH…YAKC), 388–411 (KTLI…IWGL), 413–435 (NLQF…IGNA), 436–459 (KSLG…ISGA), 461–482 (SLVS…SFGK), 483–508 (LKEL…GLCT), 510–531 (LVDL…LGSL), 532–554 (KLLN…GLSA), and 555–578 (LKLS…LVSG). N-linked (GlcNAc...) asparagine glycans are attached at residues asparagine 109, asparagine 135, asparagine 155, asparagine 195, and asparagine 206. Asparagine 267 and asparagine 278 each carry an N-linked (GlcNAc...) asparagine glycan. Asparagine 397 and asparagine 427 each carry an N-linked (GlcNAc...) asparagine glycan. A glycan (N-linked (GlcNAc...) asparagine) is linked at asparagine 495. Asparagine 538 carries N-linked (GlcNAc...) asparagine glycosylation. Residues 617–637 (CFIVAAILALFFLFSYVIFKI) form a helical membrane-spanning segment. Residues 638–991 (RRDKLNKTVQ…SANDEITKVV (354 aa)) lie on the Cytoplasmic side of the membrane. Residues 671–970 (IKSENIIGRG…SMLEKIEPSY (300 aa)) enclose the Protein kinase domain. ATP contacts are provided by residues 677–685 (IGRGGQGNV) and lysine 699. Phosphotyrosine occurs at positions 762 and 801. The active-site Proton acceptor is aspartate 814. 2 positions are modified to phosphotyrosine: tyrosine 859 and tyrosine 866. Residue threonine 867 is modified to Phosphothreonine. The segment at 972–991 (KNSGEASYGESANDEITKVV) is disordered.

It belongs to the protein kinase superfamily. Ser/Thr protein kinase family. Expressed in the endosperm of fertilized ovules.

It localises to the membrane. The enzyme catalyses L-seryl-[protein] + ATP = O-phospho-L-seryl-[protein] + ADP + H(+). It carries out the reaction L-threonyl-[protein] + ATP = O-phospho-L-threonyl-[protein] + ADP + H(+). In terms of biological role, modulates the seed size by negatively regulating the cellularization of syncytial endosperm. This Arabidopsis thaliana (Mouse-ear cress) protein is Receptor-like protein kinase HAIKU2 (IKU2).